The following is a 295-amino-acid chain: Pyridoxal 5'-phosphate synthase subunit PdxS (295 aa).

Asp-25 is a binding site for D-ribose 5-phosphate. Catalysis depends on Lys-82, which acts as the Schiff-base intermediate with D-ribose 5-phosphate. Position 154 (Gly-154) interacts with D-ribose 5-phosphate. Position 166 (Arg-166) interacts with D-glyceraldehyde 3-phosphate. D-ribose 5-phosphate-binding positions include Gly-215 and 236-237 (GS).

This sequence belongs to the PdxS/SNZ family. In the presence of PdxT, forms a dodecamer of heterodimers.

The catalysed reaction is aldehydo-D-ribose 5-phosphate + D-glyceraldehyde 3-phosphate + L-glutamine = pyridoxal 5'-phosphate + L-glutamate + phosphate + 3 H2O + H(+). It participates in cofactor biosynthesis; pyridoxal 5'-phosphate biosynthesis. Functionally, catalyzes the formation of pyridoxal 5'-phosphate from ribose 5-phosphate (RBP), glyceraldehyde 3-phosphate (G3P) and ammonia. The ammonia is provided by the PdxT subunit. Can also use ribulose 5-phosphate and dihydroxyacetone phosphate as substrates, resulting from enzyme-catalyzed isomerization of RBP and G3P, respectively. The chain is Pyridoxal 5'-phosphate synthase subunit PdxS from Staphylococcus saprophyticus subsp. saprophyticus (strain ATCC 15305 / DSM 20229 / NCIMB 8711 / NCTC 7292 / S-41).